We begin with the raw amino-acid sequence, 130 residues long: Large ribosomal subunit protein bL12 (130 aa).

Belongs to the bacterial ribosomal protein bL12 family. As to quaternary structure, homodimer. Part of the ribosomal stalk of the 50S ribosomal subunit. Forms a multimeric L10(L12)X complex, where L10 forms an elongated spine to which 2 to 4 L12 dimers bind in a sequential fashion. Binds GTP-bound translation factors.

Functionally, forms part of the ribosomal stalk which helps the ribosome interact with GTP-bound translation factors. Is thus essential for accurate translation. The polypeptide is Large ribosomal subunit protein bL12 (Nostoc punctiforme (strain ATCC 29133 / PCC 73102)).